Consider the following 275-residue polypeptide: 4-diphosphocytidyl-2-C-methyl-D-erythritol kinase (275 aa).

Lys14 is a catalytic residue. Residue Pro98–Ser108 coordinates ATP. The active site involves Asp140.

Belongs to the GHMP kinase family. IspE subfamily.

It carries out the reaction 4-CDP-2-C-methyl-D-erythritol + ATP = 4-CDP-2-C-methyl-D-erythritol 2-phosphate + ADP + H(+). It participates in isoprenoid biosynthesis; isopentenyl diphosphate biosynthesis via DXP pathway; isopentenyl diphosphate from 1-deoxy-D-xylulose 5-phosphate: step 3/6. Catalyzes the phosphorylation of the position 2 hydroxy group of 4-diphosphocytidyl-2C-methyl-D-erythritol. The sequence is that of 4-diphosphocytidyl-2-C-methyl-D-erythritol kinase from Francisella tularensis subsp. novicida (strain U112).